The chain runs to 372 residues: Putative 26S proteasome regulatory subunit homolog MTBMA_c13930 (372 aa).

164 to 171 lines the ATP pocket; sequence GSPGTGKT.

It belongs to the AAA ATPase family.

In terms of biological role, the 26S proteasome is involved in the ATP-dependent degradation of ubiquitinated proteins. The regulatory (or ATPase) complex confers ATP dependency and substrate specificity to the 26S complex. In Methanothermobacter marburgensis (strain ATCC BAA-927 / DSM 2133 / JCM 14651 / NBRC 100331 / OCM 82 / Marburg) (Methanobacterium thermoautotrophicum), this protein is Putative 26S proteasome regulatory subunit homolog MTBMA_c13930.